The sequence spans 489 residues: Blue-light-activated histidine kinase (489 aa).

In terms of domain architecture, PAS spans 19–93 (ATDPFRAAVE…AIKSAIAAEK (75 aa)). S-4a-FMN cysteine is present on C69. PAC domains lie at 93–147 (KPID…ELEK) and 232–281 (YSIE…NKAL). An HWE histidine kinase domain region spans residues 259–341 (NPLVLGIVQD…LLKENWAGAT (83 aa)). A Phosphohistidine; by autocatalysis modification is found at H288.

Post-translationally, FMN binds covalently to cysteine after exposure to blue light and this bond is spontaneously broken in the dark.

The catalysed reaction is ATP + protein L-histidine = ADP + protein N-phospho-L-histidine.. Functionally, photosensitive kinase that is involved in increased bacterial virulence upon exposure to light. Once ejected from an infected animal host, sunlight acts as an environmental signal that increases the virulence of the bacterium, preparing it for infection of the next host. This photoreceptor protein is directly related to the bacterium's survival and replication within host macrophages. The sequence is that of Blue-light-activated histidine kinase from Brucella ovis (strain ATCC 25840 / 63/290 / NCTC 10512).